The following is a 281-amino-acid chain: MASRSRRPEHSGPPELFYDQNEARKYVRNSRMIDIQTKMTERALELLCLPEGQPSYLLDIGCGSGLSGDYISEEGHYWVGIDISPAMLDAALDRDTEGDLLLGDMGQGVPFRPGSFDGCISISAVQWLCNANKKSDVPARRLYCFFSSLYSALVRGARAVLQLYPENSEQLELITTQATRAGFTGGVVVDFPNSAKAKKFYLCLFSGPSTSLPKGLTESQDADQASESMFTSERAPHKKARRDLVKKSREWVLEKKERRRRQGKEVRPDTQYTGRKRKPRF.

Over residues 212 to 231 the composition is skewed to polar residues; the sequence is LPKGLTESQDADQASESMFT. The segment at 212–281 is disordered; it reads LPKGLTESQD…YTGRKRKPRF (70 aa). Residues 242-256 show a composition bias toward basic and acidic residues; sequence RDLVKKSREWVLEKK.

It belongs to the class I-like SAM-binding methyltransferase superfamily. BUD23/WBSCR22 family. In terms of assembly, heterodimer with TRMT112; this heterodimerization is necessary for the metabolic stability and activity of the catalytic subunit BUD23. Interacts with GRIP1. In terms of processing, may be ubiquitinated and targeted to degradation in response to pro-inflammatory cytokine signaling.

The protein resides in the nucleus. It localises to the nucleoplasm. The protein localises to the cytoplasm. Its subcellular location is the perinuclear region. It catalyses the reaction a guanosine in 18S rRNA + S-adenosyl-L-methionine = an N(7)-methylguanosine in 18S rRNA + S-adenosyl-L-homocysteine. Functionally, S-adenosyl-L-methionine-dependent methyltransferase that specifically methylates the N(7) position of a guanine in 18S rRNA. Requires the methyltransferase adapter protein TRM112 for full rRNA methyltransferase activity. Involved in the pre-rRNA processing steps leading to small-subunit rRNA production independently of its RNA-modifying catalytic activity. Important for biogenesis end export of the 40S ribosomal subunit independent on its methyltransferase activity. Locus-specific steroid receptor coactivator. Potentiates transactivation by glucocorticoid (NR3C1), mineralocorticoid (NR3C2), androgen (AR) and progesterone (PGR) receptors. Required for the maintenance of open chromatin at the TSC22D3/GILZ locus to facilitate NR3C1 loading on the response elements. Required for maintenance of dimethylation on histone H3 'Lys-79' (H3K79me2), although direct histone methyltransferase activity is not observed in vitro. This chain is 18S rRNA (guanine-N(7))-methyltransferase, found in Mus musculus (Mouse).